Here is a 1021-residue protein sequence, read N- to C-terminus: MQGRADAGEADEEAGAGSGSEAEEDALWERIEGVRHRLTRALNPAKLTPYLRQCRVLDEQDEEEVLSTYRFPCRANRTGRLIDILRCRGKRGFEAFLEALEFYYPEHFTLLTGQEPAQRCSMILDEEGPEGLTQFLMTEVRRLREARKSQLHREQQLQARGRALEEERAGLEQRLREQQQAQERCQRLREDWEAGSLELLRLKDENYMIAMRLAQLSEEKNSAVLRSRDLQLAVDQLKLKVSRLEEECALLRRARGPPPGAEEKEREPDGADLLSELRAENQRLTASLQELQEGLQQEMSRPGAAGSERILLDILEHDWREAQDSRQELCQKLHAVQGELQWAEELRDKYLQEMEDLRLKHRTLLKDCDLYKHRMATVLAQLEEIEKERDQAIQSRDRIQLQYSQSLIEKDQYRKQVRGLEAERDELLTTVTSLEGTKAMLEAQLQRTQGGSCLKACASSHSLCSNLSSTWSLSEFPSPLGGPEATGEAGGSEPHTSEEATDSEKEINRLSILPFPPSAGSILRRQREEDPEPPKRSFSSMSDITGSVTLKPWSPGLSSSSSSDSVWPLGKPEGLLARGCGLDFLNRSLAIRVSGWSPPAGLDPQDKSPDSMPGLGDRWSGAVVRRVLSGPGSARTEQKEPRAEGTGLEGAGLEAEAQQRTLPWNQSSTLPFLLDSKACHSFHEALDAWAKGPGAEPFYIRANFSLPERSDPHALCVKAQEILRLVDPAHKRRQEWFCTRVDTLTLRDLDRGTVPNYQRAQQLLEVQEKYLISSRHRSPRSNLKKRALGLVRPKPAGGTAGDSAEQLPAEPCSELERSLKPYSLVRPLLVSALRPVVLLPECLAPRLIRNLLDLPSSRLDFQVCPAESLSGEEQCTSSAPGAPKAWPATAGLGSRIRAIQESVGKKHCLLELGARGVRELVHSEVYPIVIHVEVTEKNVREIRGLLGRPGWRDSELLRQCRGSEQWLWGLPCSWVQVPAHAWGHAEELAKVVRGRILQEQARLVWVERGSSRGGSGSSSEA.

Positions 1-24 are disordered; that stretch reads MQGRADAGEADEEAGAGSGSEAEE. Position 18 is a phosphoserine (S18). Residues 23–115 enclose the CARD domain; sequence EEDALWERIE…EHFTLLTGQE (93 aa). Residues 138–450 are a coiled coil; sequence TEVRRLREAR…LEAQLQRTQG (313 aa). 3 disordered regions span residues 475–544, 597–616, and 790–809; these read EFPS…MSDI, SPPAGLDPQDKSPDSMPGLG, and LVRPKPAGGTAGDSAEQLPA. Composition is skewed to basic and acidic residues over residues 495–508 and 525–535; these read HTSEEATDSEKEIN and RQREEDPEPPK.

As to quaternary structure, CARD10 and BCL10 bind to each other by CARD-CARD interaction. They both participate in a complex with MALT1, where MALT1 binds to BCL10. Interacts with TMEM43; this interaction is essential for EGFR-mediated NF-kappa-B activation. In terms of tissue distribution, highly expressed in kidney, heart followed by brain, lung, liver, skeletal muscle and testis.

Scaffold protein that plays an important role in mediating the activation of NF-kappa-B via BCL10 or EGFR. The sequence is that of Caspase recruitment domain-containing protein 10 (Card10) from Mus musculus (Mouse).